A 164-amino-acid polypeptide reads, in one-letter code: Phosphopantetheine adenylyltransferase (164 aa).

Position 9 (Ser9) interacts with substrate. ATP is bound by residues 9–10 and His17; that span reads SF. Positions 41, 73, and 87 each coordinate substrate. ATP is bound by residues 88-90, Glu98, and 123-129; these read GLR and YSYLSSS.

Belongs to the bacterial CoaD family. In terms of assembly, homohexamer. Mg(2+) serves as cofactor.

It is found in the cytoplasm. It catalyses the reaction (R)-4'-phosphopantetheine + ATP + H(+) = 3'-dephospho-CoA + diphosphate. It functions in the pathway cofactor biosynthesis; coenzyme A biosynthesis; CoA from (R)-pantothenate: step 4/5. In terms of biological role, reversibly transfers an adenylyl group from ATP to 4'-phosphopantetheine, yielding dephospho-CoA (dPCoA) and pyrophosphate. The polypeptide is Phosphopantetheine adenylyltransferase (Clostridium botulinum (strain ATCC 19397 / Type A)).